Consider the following 72-residue polypeptide: DNA-directed RNA polymerase subunit omega (72 aa).

The protein belongs to the RNA polymerase subunit omega family. In terms of assembly, the RNAP catalytic core consists of 2 alpha, 1 beta, 1 beta' and 1 omega subunit. When a sigma factor is associated with the core the holoenzyme is formed, which can initiate transcription.

The enzyme catalyses RNA(n) + a ribonucleoside 5'-triphosphate = RNA(n+1) + diphosphate. Promotes RNA polymerase assembly. Latches the N- and C-terminal regions of the beta' subunit thereby facilitating its interaction with the beta and alpha subunits. This chain is DNA-directed RNA polymerase subunit omega, found in Clostridium botulinum (strain Langeland / NCTC 10281 / Type F).